Here is an 82-residue protein sequence, read N- to C-terminus: ATP synthase subunit c, chloroplastic (82 aa).

A run of 2 helical transmembrane segments spans residues 3–23 (PLIS…ASIG) and 57–77 (FAFM…LLFA).

This sequence belongs to the ATPase C chain family. F-type ATPases have 2 components, F(1) - the catalytic core - and F(0) - the membrane proton channel. F(1) has five subunits: alpha(3), beta(3), gamma(1), delta(1), epsilon(1). F(0) has four main subunits: a(1), b(1), b'(1) and c(10-14). The alpha and beta chains form an alternating ring which encloses part of the gamma chain. F(1) is attached to F(0) by a central stalk formed by the gamma and epsilon chains, while a peripheral stalk is formed by the delta, b and b' chains.

It is found in the plastid. The protein localises to the chloroplast thylakoid membrane. In terms of biological role, f(1)F(0) ATP synthase produces ATP from ADP in the presence of a proton or sodium gradient. F-type ATPases consist of two structural domains, F(1) containing the extramembraneous catalytic core and F(0) containing the membrane proton channel, linked together by a central stalk and a peripheral stalk. During catalysis, ATP synthesis in the catalytic domain of F(1) is coupled via a rotary mechanism of the central stalk subunits to proton translocation. Functionally, key component of the F(0) channel; it plays a direct role in translocation across the membrane. A homomeric c-ring of between 10-14 subunits forms the central stalk rotor element with the F(1) delta and epsilon subunits. The polypeptide is ATP synthase subunit c, chloroplastic (Mesostigma viride (Green alga)).